Reading from the N-terminus, the 239-residue chain is Ribonuclease 3 (239 aa).

The RNase III domain maps to 12-137; that stretch reads RAKLESLIGH…LIAAIYLDGG (126 aa). E50 contributes to the Mg(2+) binding site. The active site involves D54. D123 and E126 together coordinate Mg(2+). Residue E126 is part of the active site. In terms of domain architecture, DRBM spans 162–231; the sequence is DAKTELQEWS…ATKMLEREGI (70 aa).

This sequence belongs to the ribonuclease III family. As to quaternary structure, homodimer. Mg(2+) is required as a cofactor.

Its subcellular location is the cytoplasm. It catalyses the reaction Endonucleolytic cleavage to 5'-phosphomonoester.. Its function is as follows. Digests double-stranded RNA. Involved in the processing of primary rRNA transcript to yield the immediate precursors to the large and small rRNAs (23S and 16S). Processes some mRNAs, and tRNAs when they are encoded in the rRNA operon. Processes pre-crRNA and tracrRNA of type II CRISPR loci if present in the organism. This chain is Ribonuclease 3, found in Rhizobium etli (strain CIAT 652).